The following is a 467-amino-acid chain: Fumarate hydratase class II (467 aa).

Substrate contacts are provided by residues 98 to 100, arginine 126, 129 to 132, 139 to 141, and threonine 187; these read SGT, HPND, and SSN. Histidine 188 functions as the Proton donor/acceptor in the catalytic mechanism. Serine 318 is a catalytic residue. Substrate is bound by residues serine 319 and 324–326; that span reads KVN.

Belongs to the class-II fumarase/aspartase family. Fumarase subfamily. In terms of assembly, homotetramer.

The protein localises to the cytoplasm. The enzyme catalyses (S)-malate = fumarate + H2O. Its pathway is carbohydrate metabolism; tricarboxylic acid cycle; (S)-malate from fumarate: step 1/1. Involved in the TCA cycle. Catalyzes the stereospecific interconversion of fumarate to L-malate. The chain is Fumarate hydratase class II from Salmonella typhi.